The primary structure comprises 447 residues: Asparagine--tRNA ligase (447 aa).

The protein belongs to the class-II aminoacyl-tRNA synthetase family. In terms of assembly, homodimer.

It localises to the cytoplasm. It catalyses the reaction tRNA(Asn) + L-asparagine + ATP = L-asparaginyl-tRNA(Asn) + AMP + diphosphate + H(+). This Lactococcus lactis subsp. cremoris (strain MG1363) protein is Asparagine--tRNA ligase.